The following is a 478-amino-acid chain: Putrescine oxidase (478 aa).

Residue 15–70 participates in FAD binding; that stretch reads RDVVVVGAGPAGLMAARTLVAAGRTVAVLEARDRVGGRTWSKTVDGAFLEIGGQWI.

This sequence belongs to the flavin monoamine oxidase family. Requires FAD as cofactor.

It carries out the reaction putrescine + O2 + H2O = 4-aminobutanal + H2O2 + NH4(+). The sequence is that of Putrescine oxidase (puo) from Kocuria rosea (Deinococcus erythromyxa).